Here is a 666-residue protein sequence, read N- to C-terminus: MTKEQASKLINDLRLKLNEWAKEYYVLDNPSVDDAEYDKTIHQLLDLENQFPELITSDSITQKVGGIVSDKFEKHTHKYPMLSLGDIFSWDEFINFNKQVAKVTGTENNEYTAELKIDGLSISLIYKDGVLQKGVTRGDGKVGENVTTNVKTIKSIPLSIPSKDEIEIRGEVFLGKKEFAKINEERLLNGDQLFANPRNAAAGTLRQLDSKIVAERNLDAYLYYYFNENNPINTQFDSINQIKNLGLKINKETKICKTLEEVKLYIEYYTEKRNELDYEIDGIVFKLNDKKLQEEVGYTAKTPKWAIAYKFPAEVKQTKLLDIFPTVGRTGKITYNAKLEPVQIAGTTVSAASLNNAEYIMAKDLRINSIVKVKKAGDIIPEVISAIKDEKFDLLPIWEKDVQCPACNELLEKTSTEVDQFCVNFNCPAQILRSLEHFASRGAANIVGLGGQTIKKLFEEKLITNIADIFKVEEHKENIINFEKFGEKSFENLIASIKESKNNSFEKTLFGLGIRHVGSKTALTLAQIYKNIDNLKNATYEELSSIDSVGEVLAMSIVDWFKIESNLQLINELKSFDVNFEYLGQAKNTESTISEKSFVITGTLSESRDYFKDIIELNNGKVIGSVSKKTDYVLAGENAGSKLTKAEELNVKVINEEEFFAILKGE.

Residues 34 to 38, 83 to 84, and glutamate 114 each bind NAD(+); these read DAEYD and SL. The active-site N6-AMP-lysine intermediate is lysine 116. Arginine 137, glutamate 171, lysine 286, and lysine 310 together coordinate NAD(+). Zn(2+) is bound by residues cysteine 404, cysteine 407, cysteine 422, and cysteine 427. Residues 588-666 enclose the BRCT domain; that stretch reads NTESTISEKS…EEFFAILKGE (79 aa).

Belongs to the NAD-dependent DNA ligase family. LigA subfamily. Mg(2+) is required as a cofactor. It depends on Mn(2+) as a cofactor.

It carries out the reaction NAD(+) + (deoxyribonucleotide)n-3'-hydroxyl + 5'-phospho-(deoxyribonucleotide)m = (deoxyribonucleotide)n+m + AMP + beta-nicotinamide D-nucleotide.. In terms of biological role, DNA ligase that catalyzes the formation of phosphodiester linkages between 5'-phosphoryl and 3'-hydroxyl groups in double-stranded DNA using NAD as a coenzyme and as the energy source for the reaction. It is essential for DNA replication and repair of damaged DNA. This Mesoplasma florum (strain ATCC 33453 / NBRC 100688 / NCTC 11704 / L1) (Acholeplasma florum) protein is DNA ligase.